The following is a 135-amino-acid chain: Alpha-ketoglutarate dehydrogenase subunit 4, mitochondrial (135 aa).

The protein belongs to the alpha-ketoglutarate dehydrogenase component 4 family. Component of the 2-oxoglutarate dehydrogenase complex (OGDC), also called alpha-ketoglutarate dehydrogenase (KGDH) complex. The copmplex is composed of the catalytic subunits OGDH (2-oxoglutarate dehydrogenase; also called E1 subunit), DLST (dihydrolipoamide succinyltransferase; also called E2 subunit) and DLD (dihydrolipoamide dehydrogenase; also called E3 subunit), and the assembly factor KGD4. Within OGDC, interacts (via N-terminus) with E3 subunit and (via C-terminus) with the complex core formed by E1 and E2 subunits.

The protein localises to the mitochondrion. Molecular adapter that is necessary to a form a stable 2-oxoglutarate dehydrogenase enzyme complex (OGDC). Required for incorporation of the E3 subunit into the E1-E2 core of mitochondrial OGDC, and acting as a stability factor for the fully assembled complex. The protein is Alpha-ketoglutarate dehydrogenase subunit 4, mitochondrial (KGD4) of Chaetomium thermophilum (strain DSM 1495 / CBS 144.50 / IMI 039719) (Thermochaetoides thermophila).